Reading from the N-terminus, the 273-residue chain is 2,3,4,5-tetrahydropyridine-2,6-dicarboxylate N-succinyltransferase (273 aa).

Residues arginine 104 and aspartate 141 each contribute to the substrate site.

This sequence belongs to the transferase hexapeptide repeat family. Homotrimer.

The protein localises to the cytoplasm. It carries out the reaction (S)-2,3,4,5-tetrahydrodipicolinate + succinyl-CoA + H2O = (S)-2-succinylamino-6-oxoheptanedioate + CoA. Its pathway is amino-acid biosynthesis; L-lysine biosynthesis via DAP pathway; LL-2,6-diaminopimelate from (S)-tetrahydrodipicolinate (succinylase route): step 1/3. This Neisseria meningitidis serogroup B (strain ATCC BAA-335 / MC58) protein is 2,3,4,5-tetrahydropyridine-2,6-dicarboxylate N-succinyltransferase.